The sequence spans 227 residues: Enolase-phosphatase E1 (227 aa).

The protein belongs to the HAD-like hydrolase superfamily. MasA/MtnC family. In terms of assembly, monomer. Requires Mg(2+) as cofactor.

The catalysed reaction is 5-methylsulfanyl-2,3-dioxopentyl phosphate + H2O = 1,2-dihydroxy-5-(methylsulfanyl)pent-1-en-3-one + phosphate. The protein operates within amino-acid biosynthesis; L-methionine biosynthesis via salvage pathway; L-methionine from S-methyl-5-thio-alpha-D-ribose 1-phosphate: step 3/6. It participates in amino-acid biosynthesis; L-methionine biosynthesis via salvage pathway; L-methionine from S-methyl-5-thio-alpha-D-ribose 1-phosphate: step 4/6. Functionally, bifunctional enzyme that catalyzes the enolization of 2,3-diketo-5-methylthiopentyl-1-phosphate (DK-MTP-1-P) into the intermediate 2-hydroxy-3-keto-5-methylthiopentenyl-1-phosphate (HK-MTPenyl-1-P), which is then dephosphorylated to form the acireductone 1,2-dihydroxy-3-keto-5-methylthiopentene (DHK-MTPene). The sequence is that of Enolase-phosphatase E1 from Pseudomonas savastanoi pv. phaseolicola (strain 1448A / Race 6) (Pseudomonas syringae pv. phaseolicola (strain 1448A / Race 6)).